A 226-amino-acid polypeptide reads, in one-letter code: ATP synthase F(0) complex subunit a (226 aa).

Transmembrane regions (helical) follow at residues 6 to 26, 68 to 88, 97 to 117, 138 to 158, 164 to 184, and 193 to 213; these read FAPF…IMIF, WTLM…LGLL, QLSM…LMGF, IPML…ALAV, ITAG…LSSI, and FTIL…QAYV.

The protein belongs to the ATPase A chain family. In terms of assembly, component of the ATP synthase complex composed at least of ATP5F1A/subunit alpha, ATP5F1B/subunit beta, ATP5MC1/subunit c (homooctomer), MT-ATP6/subunit a, MT-ATP8/subunit 8, ATP5ME/subunit e, ATP5MF/subunit f, ATP5MG/subunit g, ATP5MK/subunit k, ATP5MJ/subunit j, ATP5F1C/subunit gamma, ATP5F1D/subunit delta, ATP5F1E/subunit epsilon, ATP5PF/subunit F6, ATP5PB/subunit b, ATP5PD/subunit d, ATP5PO/subunit OSCP. ATP synthase complex consists of a soluble F(1) head domain (subunits alpha(3) and beta(3)) - the catalytic core - and a membrane F(0) domain - the membrane proton channel (subunits c, a, 8, e, f, g, k and j). These two domains are linked by a central stalk (subunits gamma, delta, and epsilon) rotating inside the F1 region and a stationary peripheral stalk (subunits F6, b, d, and OSCP). Interacts with DNAJC30; interaction is direct.

It localises to the mitochondrion inner membrane. It carries out the reaction H(+)(in) = H(+)(out). Functionally, subunit a, of the mitochondrial membrane ATP synthase complex (F(1)F(0) ATP synthase or Complex V) that produces ATP from ADP in the presence of a proton gradient across the membrane which is generated by electron transport complexes of the respiratory chain. ATP synthase complex consist of a soluble F(1) head domain - the catalytic core - and a membrane F(1) domain - the membrane proton channel. These two domains are linked by a central stalk rotating inside the F(1) region and a stationary peripheral stalk. During catalysis, ATP synthesis in the catalytic domain of F(1) is coupled via a rotary mechanism of the central stalk subunits to proton translocation. With the subunit c (ATP5MC1), forms the proton-conducting channel in the F(0) domain, that contains two crucial half-channels (inlet and outlet) that facilitate proton movement from the mitochondrial intermembrane space (IMS) into the matrix. Protons are taken up via the inlet half-channel and released through the outlet half-channel, following a Grotthuss mechanism. The polypeptide is ATP synthase F(0) complex subunit a (Ornithorhynchus anatinus (Duckbill platypus)).